A 194-amino-acid polypeptide reads, in one-letter code: Peptidyl-tRNA hydrolase (194 aa).

Tyr-16 is a tRNA binding site. His-21 acts as the Proton acceptor in catalysis. Residues Phe-67, Asn-69, and Asn-115 each coordinate tRNA.

It belongs to the PTH family. Monomer.

The protein resides in the cytoplasm. The catalysed reaction is an N-acyl-L-alpha-aminoacyl-tRNA + H2O = an N-acyl-L-amino acid + a tRNA + H(+). In terms of biological role, hydrolyzes ribosome-free peptidyl-tRNAs (with 1 or more amino acids incorporated), which drop off the ribosome during protein synthesis, or as a result of ribosome stalling. Catalyzes the release of premature peptidyl moieties from peptidyl-tRNA molecules trapped in stalled 50S ribosomal subunits, and thus maintains levels of free tRNAs and 50S ribosomes. This Shigella boydii serotype 18 (strain CDC 3083-94 / BS512) protein is Peptidyl-tRNA hydrolase.